The following is a 237-amino-acid chain: 1-(5-phosphoribosyl)-5-[(5-phosphoribosylamino)methylideneamino] imidazole-4-carboxamide isomerase (237 aa).

Asp8 acts as the Proton acceptor in catalysis. Residue Asp127 is the Proton donor of the active site.

This sequence belongs to the HisA/HisF family.

Its subcellular location is the cytoplasm. It carries out the reaction 1-(5-phospho-beta-D-ribosyl)-5-[(5-phospho-beta-D-ribosylamino)methylideneamino]imidazole-4-carboxamide = 5-[(5-phospho-1-deoxy-D-ribulos-1-ylimino)methylamino]-1-(5-phospho-beta-D-ribosyl)imidazole-4-carboxamide. Its pathway is amino-acid biosynthesis; L-histidine biosynthesis; L-histidine from 5-phospho-alpha-D-ribose 1-diphosphate: step 4/9. The chain is 1-(5-phosphoribosyl)-5-[(5-phosphoribosylamino)methylideneamino] imidazole-4-carboxamide isomerase from Sulfurovum sp. (strain NBC37-1).